A 306-amino-acid chain; its full sequence is Lipoyl synthase (306 aa).

Residues Cys55, Cys60, Cys66, Cys81, Cys85, Cys88, and Ser294 each coordinate [4Fe-4S] cluster. The Radical SAM core domain maps to 67–283; that stretch reads WNHRTATFLL…RSYALARGFT (217 aa).

This sequence belongs to the radical SAM superfamily. Lipoyl synthase family. [4Fe-4S] cluster serves as cofactor.

It is found in the cytoplasm. It catalyses the reaction [[Fe-S] cluster scaffold protein carrying a second [4Fe-4S](2+) cluster] + N(6)-octanoyl-L-lysyl-[protein] + 2 oxidized [2Fe-2S]-[ferredoxin] + 2 S-adenosyl-L-methionine + 4 H(+) = [[Fe-S] cluster scaffold protein] + N(6)-[(R)-dihydrolipoyl]-L-lysyl-[protein] + 4 Fe(3+) + 2 hydrogen sulfide + 2 5'-deoxyadenosine + 2 L-methionine + 2 reduced [2Fe-2S]-[ferredoxin]. It participates in protein modification; protein lipoylation via endogenous pathway; protein N(6)-(lipoyl)lysine from octanoyl-[acyl-carrier-protein]: step 2/2. Its function is as follows. Catalyzes the radical-mediated insertion of two sulfur atoms into the C-6 and C-8 positions of the octanoyl moiety bound to the lipoyl domains of lipoate-dependent enzymes, thereby converting the octanoylated domains into lipoylated derivatives. The chain is Lipoyl synthase from Chloroflexus aurantiacus (strain ATCC 29364 / DSM 637 / Y-400-fl).